The sequence spans 201 residues: uncharacterized protein (201 aa).

This sequence belongs to the methyltransferase superfamily.

This is an uncharacterized protein from Bacillus subtilis (strain 168).